Consider the following 216-residue polypeptide: ATP-dependent Clp protease proteolytic subunit (216 aa).

Catalysis depends on Ser-101, which acts as the Nucleophile. His-126 is an active-site residue.

It belongs to the peptidase S14 family. As to quaternary structure, component of the chloroplastic Clp protease core complex.

Its subcellular location is the plastid. It localises to the chloroplast stroma. It catalyses the reaction Hydrolysis of proteins to small peptides in the presence of ATP and magnesium. alpha-casein is the usual test substrate. In the absence of ATP, only oligopeptides shorter than five residues are hydrolyzed (such as succinyl-Leu-Tyr-|-NHMec, and Leu-Tyr-Leu-|-Tyr-Trp, in which cleavage of the -Tyr-|-Leu- and -Tyr-|-Trp bonds also occurs).. Cleaves peptides in various proteins in a process that requires ATP hydrolysis. Has a chymotrypsin-like activity. Plays a major role in the degradation of misfolded proteins. The sequence is that of ATP-dependent Clp protease proteolytic subunit from Triticum aestivum (Wheat).